A 460-amino-acid polypeptide reads, in one-letter code: tRNA modification GTPase MnmE (460 aa).

3 residues coordinate (6S)-5-formyl-5,6,7,8-tetrahydrofolate: R29, E89, and R128. Residues 224–382 enclose the TrmE-type G domain; that stretch reads GVPTVIIGKP…LKQNLLEIIQ (159 aa). N234 is a K(+) binding site. GTP-binding positions include 234–239, 253–259, and 278–281; these read NAGKST, SEIAGTT, and DTAG. A Mg(2+)-binding site is contributed by S238. S253, I255, and T258 together coordinate K(+). Residue T259 coordinates Mg(2+). K460 contacts (6S)-5-formyl-5,6,7,8-tetrahydrofolate.

Belongs to the TRAFAC class TrmE-Era-EngA-EngB-Septin-like GTPase superfamily. TrmE GTPase family. As to quaternary structure, homodimer. Heterotetramer of two MnmE and two MnmG subunits. Requires K(+) as cofactor.

It localises to the cytoplasm. Functionally, exhibits a very high intrinsic GTPase hydrolysis rate. Involved in the addition of a carboxymethylaminomethyl (cmnm) group at the wobble position (U34) of certain tRNAs, forming tRNA-cmnm(5)s(2)U34. This Cytophaga hutchinsonii (strain ATCC 33406 / DSM 1761 / CIP 103989 / NBRC 15051 / NCIMB 9469 / D465) protein is tRNA modification GTPase MnmE.